A 121-amino-acid chain; its full sequence is Protein MGF 110-5L (121 aa).

Positions 1 to 20 (MLVIFLGILGLLANQVSSQL) are cleaved as a signal peptide. 2 N-linked (GlcNAc...) asparagine; by host glycosylation sites follow: Asn-62 and Asn-116.

Belongs to the asfivirus MGF 110 family.

The polypeptide is Protein MGF 110-5L (African swine fever virus (isolate Portugal/Lis 57/1957) (ASFV)).